Consider the following 166-residue polypeptide: Bacterial non-heme ferritin (166 aa).

The 144-residue stretch at 2 to 145 folds into the Ferritin-like diiron domain; the sequence is LSKDLLEALN…THIDYLNRIG (144 aa). Residues E17, E50, H53, E94, and Q127 each coordinate Fe cation.

This sequence belongs to the ferritin family. Prokaryotic subfamily.

The protein localises to the cytoplasm. The catalysed reaction is 4 Fe(2+) + O2 + 6 H2O = 4 iron(III) oxide-hydroxide + 12 H(+). Its function is as follows. Iron-storage protein. The chain is Bacterial non-heme ferritin (ftnA) from Staphylococcus haemolyticus (strain JCSC1435).